Reading from the N-terminus, the 132-residue chain is Cytidine deaminase (132 aa).

Positions 1 to 128 constitute a CMP/dCMP-type deaminase domain; sequence MDRQMLIKEA…ELLPGAFTAE (128 aa). 42–44 lines the substrate pocket; sequence NIE. Cys53 serves as a coordination point for Zn(2+). Catalysis depends on Glu55, which acts as the Proton donor. 2 residues coordinate Zn(2+): Cys86 and Cys89.

The protein belongs to the cytidine and deoxycytidylate deaminase family. Zn(2+) is required as a cofactor.

It catalyses the reaction cytidine + H2O + H(+) = uridine + NH4(+). The catalysed reaction is 2'-deoxycytidine + H2O + H(+) = 2'-deoxyuridine + NH4(+). In terms of biological role, this enzyme scavenges exogenous and endogenous cytidine and 2'-deoxycytidine for UMP synthesis. The chain is Cytidine deaminase (cdd) from Halalkalibacterium halodurans (strain ATCC BAA-125 / DSM 18197 / FERM 7344 / JCM 9153 / C-125) (Bacillus halodurans).